Consider the following 307-residue polypeptide: Ubiquinol oxidase subunit 2 (307 aa).

A signal peptide spans 1 to 23; it reads MKNKLLARVARLGGLSSALLLAG. C24 carries the N-palmitoyl cysteine lipid modification. C24 carries the S-diacylglycerol cysteine lipid modification. 2 helical membrane-spanning segments follow: residues 46-66 and 87-107; these read STVA…LFAW and IEVT…VITY.

This sequence belongs to the cytochrome c oxidase subunit 2 family. As to quaternary structure, heterotetramer of the subunits 1, 2, 3 and 4.

Its subcellular location is the cell membrane. The protein is Ubiquinol oxidase subunit 2 (cyaB) of Acetobacter aceti.